A 315-amino-acid polypeptide reads, in one-letter code: Taste receptor type 2 member 3 (315 aa).

The Extracellular portion of the chain corresponds to 1–5 (MGLTE). A helical membrane pass occupies residues 6–26 (GLFLILSGTQFALGILVNCFI). Residues 27-41 (GLVNGSSWFKTKRMS) are Cytoplasmic-facing. Residues 42-62 (LSDFIITTLAFLRIILLCIIL) form a helical membrane-spanning segment. Over 63–93 (TDSFLIEFSPNAHDSGVIMQIIDVSWTFTNH) the chain is Extracellular. Residues 94 to 114 (LSIWLATCLGVLYCLKIASFS) traverse the membrane as a helical segment. At 115–127 (HPTFLWLKWRVSR) the chain is on the cytoplasmic side. Residues 128-148 (VMVWMLLGVLLLSCGSTASLI) form a helical membrane-spanning segment. Residues 149–185 (NEFKLYSVFRGIEATXNVTEHFRKKRSEYYLIHVLGT) are Extracellular-facing. Asn165 carries an N-linked (GlcNAc...) asparagine glycan. Residues 186 to 206 (LWYLPPLIVSLAAYFLLIFSL) traverse the membrane as a helical segment. The Cytoplasmic portion of the chain corresponds to 207-233 (GRHTRQMLQNGTSSRDPSTEAHKRAIR). The helical transmembrane segment at 234-254 (IILSSFFLFLLYFLAFLIASF) threads the bilayer. The Extracellular portion of the chain corresponds to 255-265 (GNFLPKTKMAK). The helical transmembrane segment at 266 to 286 (MIGEVMTMFYPAGHSFILILG) threads the bilayer. The Cytoplasmic segment spans residues 287–315 (NSKLKQTFVEMLRCESGHLKPGSKGPIFS).

The protein belongs to the G-protein coupled receptor T2R family.

The protein localises to the membrane. Functionally, gustducin-coupled receptor implicated in the perception of bitter compounds in the oral cavity and the gastrointestinal tract. Signals through PLCB2 and the calcium-regulated cation channel TRPM5. The chain is Taste receptor type 2 member 3 (TAS2R3) from Pongo pygmaeus (Bornean orangutan).